We begin with the raw amino-acid sequence, 310 residues long: Tagatose-6-phosphate kinase (310 aa).

Belongs to the carbohydrate kinase PfkB family. LacC subfamily.

It catalyses the reaction D-tagatofuranose 6-phosphate + ATP = D-tagatofuranose 1,6-bisphosphate + ADP + H(+). It participates in carbohydrate metabolism; D-tagatose 6-phosphate degradation; D-glyceraldehyde 3-phosphate and glycerone phosphate from D-tagatose 6-phosphate: step 1/2. The sequence is that of Tagatose-6-phosphate kinase from Lactococcus lactis subsp. lactis (Streptococcus lactis).